Here is a 288-residue protein sequence, read N- to C-terminus: CBY1-interacting BAR domain-containing protein 1 (288 aa).

A mitochondrion-targeting transit peptide spans 1–47 (MLRRSLENRDAQTRQLQDAVTNVEKHFGELCQIFAAYVRKTARLRDK). The BAR-like stretch occupies residues 10-220 (DAQTRQLQDA…KIDEEEDLEV (211 aa)). Positions 107–176 (KMKRDDLKAT…ETIDNFEKQK (70 aa)) form a coiled coil. A disordered region spans residues 266–288 (RKDHQTEDDDEEDEDLDVTEEEN). Acidic residues predominate over residues 271–288 (TEDDDEEDEDLDVTEEEN).

It belongs to the CIBAR family. In terms of assembly, homodimer (via BAR-like domain). Heterodimer with FAM92B (via BAR-like domains). Interacts (via BAR-like domain) with CBY1; this interaction is required for targeting FAM92A to centriole and cilium basal body. Interacts (via BAR-like domain) with CBY3; both proteins form a ninefold symmetric structure at the flagellar base; are recruited to the annulus in a mutually dependent manner and regulate annulus positionning.

Its subcellular location is the cytoplasm. The protein resides in the cytoskeleton. It localises to the microtubule organizing center. The protein localises to the centrosome. It is found in the centriole. Its subcellular location is the cilium basal body. The protein resides in the cell projection. It localises to the cilium. The protein localises to the nucleus. It is found in the mitochondrion inner membrane. Its subcellular location is the flagellum. Functionally, plays a critical role in regulating mitochondrial ultrastructure and function by maintaining the integrity of mitochondrial morphology, particularly the organization of cristae. Preferentially binds to negatively charged phospholipids like cardiolipin and phosphatidylinositol 4,5-bisphosphate enhancing its interaction with mitochondrial membranes. Induces membrane curvature and tubulation, which are critical for maintaining mitochondrial ultrastructure and the organization of cristae. Plays a crucial role in ciliogenesis. May play a role in limb development through its role in ciliogenesis. Plays a key role in the correct positioning of the annulus, a septin-based ring structure in the sperm flagellum, serving both as a physical barrier and a membrane diffusion barrier that separates the midpiece (MP) from the principal piece (PP). This positioning is essential for proper sperm motility and function. Interacts with CBY3 to form a complex which localizes to the curved membrane region of the flagellar pocket. By doing so, may provide stability and rigidity to the periannular membrane to prevent membrane deformation. This function is crucial for halting annulus migration at the proximal end of the fibrous sheath-containing PP. This chain is CBY1-interacting BAR domain-containing protein 1, found in Bos taurus (Bovine).